Here is a 451-residue protein sequence, read N- to C-terminus: Tubulin alpha-2 chain (451 aa).

Glutamine 11 contributes to the GTP binding site. Lysine 40 is modified (N6-acetyllysine). GTP is bound by residues glutamate 71, glycine 144, threonine 145, threonine 179, asparagine 206, and asparagine 228. Glutamate 71 is a binding site for Mg(2+). Glutamate 254 is an active-site residue.

The protein belongs to the tubulin family. Dimer of alpha and beta chains. A typical microtubule is a hollow water-filled tube with an outer diameter of 25 nm and an inner diameter of 15 nM. Alpha-beta heterodimers associate head-to-tail to form protofilaments running lengthwise along the microtubule wall with the beta-tubulin subunit facing the microtubule plus end conferring a structural polarity. Microtubules usually have 13 protofilaments but different protofilament numbers can be found in some organisms and specialized cells. Requires Mg(2+) as cofactor. Post-translationally, undergoes a tyrosination/detyrosination cycle, the cyclic removal and re-addition of a C-terminal tyrosine residue by the enzymes tubulin tyrosine carboxypeptidase (TTCP) and tubulin tyrosine ligase (TTL), respectively.

It localises to the cytoplasm. Its subcellular location is the cytoskeleton. The catalysed reaction is GTP + H2O = GDP + phosphate + H(+). In terms of biological role, tubulin is the major constituent of microtubules, a cylinder consisting of laterally associated linear protofilaments composed of alpha- and beta-tubulin heterodimers. Microtubules grow by the addition of GTP-tubulin dimers to the microtubule end, where a stabilizing cap forms. Below the cap, tubulin dimers are in GDP-bound state, owing to GTPase activity of alpha-tubulin. The protein is Tubulin alpha-2 chain (TUBA2) of Chlamydomonas reinhardtii (Chlamydomonas smithii).